The sequence spans 434 residues: D-amino acid dehydrogenase (434 aa).

3-17 is an FAD binding site; sequence VIVLGSGVIGTTTAY.

Belongs to the DadA oxidoreductase family. FAD is required as a cofactor.

It catalyses the reaction a D-alpha-amino acid + A + H2O = a 2-oxocarboxylate + AH2 + NH4(+). Its pathway is amino-acid degradation; D-alanine degradation; NH(3) and pyruvate from D-alanine: step 1/1. Functionally, oxidative deamination of D-amino acids. The polypeptide is D-amino acid dehydrogenase (Bordetella petrii (strain ATCC BAA-461 / DSM 12804 / CCUG 43448)).